The primary structure comprises 320 residues: tRNA pseudouridine synthase B (320 aa).

D49 acts as the Nucleophile in catalysis.

This sequence belongs to the pseudouridine synthase TruB family. Type 1 subfamily.

The catalysed reaction is uridine(55) in tRNA = pseudouridine(55) in tRNA. In terms of biological role, responsible for synthesis of pseudouridine from uracil-55 in the psi GC loop of transfer RNAs. This is tRNA pseudouridine synthase B from Bartonella bacilliformis (strain ATCC 35685 / KC583 / Herrer 020/F12,63).